The sequence spans 29 residues: Glucagon (29 aa).

Belongs to the glucagon family.

The protein localises to the secreted. Its function is as follows. Promotes hydrolysis of glycogen and lipids, and raises the blood sugar level. This is Glucagon (gcg) from Torpedo marmorata (Marbled electric ray).